Reading from the N-terminus, the 133-residue chain is ATP synthase epsilon chain, chloroplastic (133 aa).

The protein belongs to the ATPase epsilon chain family. In terms of assembly, F-type ATPases have 2 components, CF(1) - the catalytic core - and CF(0) - the membrane proton channel. CF(1) has five subunits: alpha(3), beta(3), gamma(1), delta(1), epsilon(1). CF(0) has three main subunits: a, b and c.

It localises to the plastid. Its subcellular location is the chloroplast thylakoid membrane. Functionally, produces ATP from ADP in the presence of a proton gradient across the membrane. The sequence is that of ATP synthase epsilon chain, chloroplastic from Trieres chinensis (Marine centric diatom).